The sequence spans 223 residues: Ribonuclease 3 (223 aa).

One can recognise an RNase III domain in the interval 4 to 127 (LENLQKLLGY…VMGAVYLEAG (124 aa)). A Mg(2+)-binding site is contributed by Glu40. Residue Asp44 is part of the active site. Positions 113 and 116 each coordinate Mg(2+). The active site involves Glu116. The DRBM domain maps to 154–223 (DYKTALQEIT…AKIALEKMKK (70 aa)).

This sequence belongs to the ribonuclease III family. In terms of assembly, homodimer. It depends on Mg(2+) as a cofactor.

Its subcellular location is the cytoplasm. It carries out the reaction Endonucleolytic cleavage to 5'-phosphomonoester.. Digests double-stranded RNA. Involved in the processing of primary rRNA transcript to yield the immediate precursors to the large and small rRNAs (23S and 16S). Processes some mRNAs, and tRNAs when they are encoded in the rRNA operon. Processes pre-crRNA and tracrRNA of type II CRISPR loci if present in the organism. This chain is Ribonuclease 3, found in Campylobacter curvus (strain 525.92).